Here is a 438-residue protein sequence, read N- to C-terminus: Battenin (438 aa).

The segment at 1–29 (MGGCAGSRRRLLDSEEEETAPEPRPPRSY) is disordered. Over 1–37 (MGGCAGSRRRLLDSEEEETAPEPRPPRSYHKGALWKN) the chain is Cytoplasmic. Ser14 is subject to Phosphoserine. Residues 38-58 (VMGFWLLGLCNNFSYVVMLSA) form a helical membrane-spanning segment. Over 59–127 (AHDILSHQRA…GLHLLPYSPR (69 aa)) the chain is Lumenal. The interval 68–89 (ASGNQSHVDPDPPPTAHNSSSR) is disordered. Asn71 and Asn85 each carry an N-linked (GlcNAc...) asparagine glycan. Residues 128-148 (VLVSGICAAGSFILVAFSHSV) form a helical membrane-spanning segment. Over 149–151 (GTS) the chain is Cytoplasmic. A helical transmembrane segment spans residues 152 to 172 (LCGVVLASISSGVGEVTFLSL). Over 173 to 182 (TAFYPRAVIS) the chain is Lumenal. The helical transmembrane segment at 183-203 (WWSSGTGGAGLMGALSYLGLT) threads the bilayer. Residues 204–277 (QAGLSPQHTL…NLSLQERWTV (74 aa)) are Cytoplasmic-facing. Residues 236 to 267 (PQDPGGEEEAETSARQPLIDSETPESKPDSSS) form a disordered region. Residues 242-244 (EEE) carry the Lysosomal targeting motif motif. A Lysosomal targeting motif. Required for AP1G1, AP2A2 and AP3D1 interaction motif is present at residues 253–254 (LI). The chain crosses the membrane as a helical span at residues 278-298 (FKGLLWYIVPLVLVYFAEYFI). Topologically, residues 299 to 346 (NQGLFELLFFRNTSLNHAQQYRWYQMLYQAGVFVSRSSLHCCRIRFTW) are lumenal. Asn310 is a glycosylation site (N-linked (GlcNAc...) asparagine). The helical transmembrane segment at 347–367 (VLALLQCLNLAFLLVDVWFSF) threads the bilayer. Topologically, residues 368 to 438 (LPSIYLVFLI…PLHDFLCHLS (71 aa)) are cytoplasmic. Positions 409-419 (MAAACISDTLG) match the Lysosomal targeting motif motif. Cys435 bears the Cysteine methyl ester mark. Cys435 carries S-farnesyl cysteine lipidation. A propeptide spans 436 to 438 (HLS) (removed in mature form).

This sequence belongs to the battenin family. Interacts with DCTN1, KIF3A, RAB7A and RILP. Interacts with CLN5. Post-translationally, highly glycosylated. In terms of processing, farnesylation is important for trafficking to lysosomes.

Its subcellular location is the lysosome membrane. It localises to the late endosome. It is found in the lysosome. Functionally, mediates microtubule-dependent, anterograde transport connecting the Golgi network, endosomes, autophagosomes, lysosomes and plasma membrane, and participates in several cellular processes such as regulation of lysosomal pH, lysosome protein degradation, receptor-mediated endocytosis, autophagy, transport of proteins and lipids from the TGN, apoptosis and synaptic transmission. Facilitates the proteins transport from trans-Golgi network (TGN)-to other membrane compartments such as transport of microdomain-associated proteins to the plasma membrane, IGF2R transport to the lysosome where it regulates the CTSD release leading to regulation of CTSD maturation and thereby APP intracellular processing. Moreover regulates CTSD activity in response to osmotic stress. Also binds galactosylceramide and transports it from the trans Golgi to the rafts, which may have immediate and downstream effects on cell survival by modulating ceramide synthesis. At the plasma membrane, regulates actin-dependent events including filopodia formation, cell migration, and pinocytosis through ARF1-CDC42 pathway and also the cytoskeleton organization through interaction with MYH10 and fodrin leading to the regulation of the plasma membrane association of Na+, K+ ATPase complex. Regulates synaptic transmission in the amygdala, hippocampus, and cerebellum through regulation of synaptic vesicles density and their proximity to active zones leading to modulation of short-term plasticity and age-dependent anxious behavior, learning and memory. Regulates autophagic vacuoles (AVs) maturation by modulating the trafficking between endocytic and autophagolysosomal/lysosomal compartments, which involves vesicle fusion leading to regulation of degradation process. Also participates in cellular homeostasis of compounds such as, water, ions, amino acids, proteins and lipids in several tissue namely in brain and kidney through regulation of their transport and synthesis. This chain is Battenin, found in Canis lupus familiaris (Dog).